A 377-amino-acid chain; its full sequence is S-adenosylmethionine decarboxylase proenzyme 2 (377 aa).

Residues Glu24 and Glu27 contribute to the active site. Residue Ser84 is the Schiff-base intermediate with substrate; via pyruvic acid of the active site. Ser84 is subject to Pyruvic acid (Ser); by autocatalysis. Cys98 acts as the Proton donor; for catalytic activity in catalysis. Catalysis depends on proton acceptor; for processing activity residues Ser246 and His259.

The protein belongs to the eukaryotic AdoMetDC family. Pyruvate serves as cofactor. In terms of processing, is synthesized initially as an inactive proenzyme. Formation of the active enzyme involves a self-maturation process in which the active site pyruvoyl group is generated from an internal serine residue via an autocatalytic post-translational modification. Two non-identical subunits are generated from the proenzyme in this reaction, and the pyruvate is formed at the N-terminus of the alpha chain, which is derived from the carboxyl end of the proenzyme. The post-translation cleavage follows an unusual pathway, termed non-hydrolytic serinolysis, in which the side chain hydroxyl group of the serine supplies its oxygen atom to form the C-terminus of the beta chain, while the remainder of the serine residue undergoes an oxidative deamination to produce ammonia and the pyruvoyl group blocking the N-terminus of the alpha chain.

It carries out the reaction S-adenosyl-L-methionine + H(+) = S-adenosyl 3-(methylsulfanyl)propylamine + CO2. Its pathway is amine and polyamine biosynthesis; S-adenosylmethioninamine biosynthesis; S-adenosylmethioninamine from S-adenosyl-L-methionine: step 1/1. The chain is S-adenosylmethionine decarboxylase proenzyme 2 (SAMDC2) from Dianthus caryophyllus (Carnation).